The sequence spans 444 residues: MAEFFPEIPKVQFEGKESTNPLAFKFYDPEEIIDGKPLKDHLKFSVAFWHTFVNEGRDPFGDPTADRPWNRYTDPMDKAFARVDALFEFCEKLNIEYFCFHDRDIAPEGKTLRETNKILDKVVERIKERMKDSNVKLLWGTANLFSHPRYMHGAATTCSADVFAYAAAQVKKALEITKELGGEGYVFWGGREGYETLLNTDLGFELENLARFLRMAVDYAKRIGFTGQFLIEPKPKEPTKHQYDFDVATAYAFLKSHGLDEYFKFNIEANHATLAGHTFQHELRMARILGKLGSIDANQGDLLLGWDTDQFPTNVYDTTLAMYEVIKAGGFTKGGLNFDAKVRRASYKVEDLFIGHIAGMDTFALGFKVAYKLVKDGVLDKFIEEKYRSFREGIGRDIVEGKVDFEKLEEYIIDKETIELPSGKQEYLESLINSYIVKTILELR.

Mg(2+)-binding residues include D307 and D309.

Belongs to the xylose isomerase family. In terms of assembly, homotetramer. It depends on Mg(2+) as a cofactor.

The protein resides in the cytoplasm. The catalysed reaction is alpha-D-xylose = alpha-D-xylulofuranose. In Thermotoga neapolitana (strain ATCC 49049 / DSM 4359 / NBRC 107923 / NS-E), this protein is Xylose isomerase.